The primary structure comprises 84 residues: Small ribosomal subunit protein eS27 (84 aa).

Over residues 1 to 16 (MPLAKDLLHPTPEEEK) the composition is skewed to basic and acidic residues. Residues 1–23 (MPLAKDLLHPTPEEEKRKHKKKR) form a disordered region. Residues 37-59 (CPGCYKITTVFSHAQTVVLCVGC) form a C4-type zinc finger.

This sequence belongs to the eukaryotic ribosomal protein eS27 family. As to quaternary structure, component of the small ribosomal subunit. Part of the small subunit (SSU) processome, composed of more than 70 proteins and the RNA chaperone small nucleolar RNA (snoRNA) U3. The cofactor is Zn(2+).

Its subcellular location is the cytoplasm. It is found in the nucleus. It localises to the nucleolus. Functionally, component of the small ribosomal subunit. The ribosome is a large ribonucleoprotein complex responsible for the synthesis of proteins in the cell. Required for proper rRNA processing and maturation of 18S rRNAs. Part of the small subunit (SSU) processome, first precursor of the small eukaryotic ribosomal subunit. During the assembly of the SSU processome in the nucleolus, many ribosome biogenesis factors, an RNA chaperone and ribosomal proteins associate with the nascent pre-rRNA and work in concert to generate RNA folding, modifications, rearrangements and cleavage as well as targeted degradation of pre-ribosomal RNA by the RNA exosome. The polypeptide is Small ribosomal subunit protein eS27 (rps27) (Xenopus laevis (African clawed frog)).